Reading from the N-terminus, the 286-residue chain is 4-diphosphocytidyl-2-C-methyl-D-erythritol kinase (286 aa).

Lys-11 is a catalytic residue. 93 to 103 lines the ATP pocket; sequence PFGAGLGGGSS. Residue Asp-135 is part of the active site.

This sequence belongs to the GHMP kinase family. IspE subfamily.

It carries out the reaction 4-CDP-2-C-methyl-D-erythritol + ATP = 4-CDP-2-C-methyl-D-erythritol 2-phosphate + ADP + H(+). Its pathway is isoprenoid biosynthesis; isopentenyl diphosphate biosynthesis via DXP pathway; isopentenyl diphosphate from 1-deoxy-D-xylulose 5-phosphate: step 3/6. Functionally, catalyzes the phosphorylation of the position 2 hydroxy group of 4-diphosphocytidyl-2C-methyl-D-erythritol. The protein is 4-diphosphocytidyl-2-C-methyl-D-erythritol kinase of Chlorobaculum parvum (strain DSM 263 / NCIMB 8327) (Chlorobium vibrioforme subsp. thiosulfatophilum).